The following is a 471-amino-acid chain: MNAAGGGSGAQAAAVAAGNNSLSHNALLSTASGATTMPMAQLADGWLELESDPGLFTLLLKDFGCHDVQVEEVYDLQKPIESPYGFIFLFRWIEERRARRKIVETTAEIFVKDEEAISSIFFAQQVVPNSCATHALLSVLLNCNENNLQLGDTLSRLKTHTKGMSPENKGLAIGNTPELACAHNSHAMPQARRRLERTGAGVSSCRFTGEAFHFVSFVPINGQLFELDGLKPYPMNHGGWEDSEDWTDKFRRVMAERLGIATGEQDIRFNLMAVVPDRRIAITHKLKMLRTNQAIVSGTLQKLLKADEQGESGNGDSQRPDTPTTLLEPSAFTARDLQSLLKNLDTEIAINEQHLADENDRRHMFKVDASRRTHNYDKFICTFLSMLAHQGVLGELVSQHLLPSKKVSGQGAANRISKQSTTASAGGSTAAGTASTPKTQQQQAAAAKNGKSPSKTPGRRRKGRNKCRKRK.

The UCH catalytic domain maps to 45 to 276 (GWLELESDPG…IRFNLMAVVP (232 aa)). The active-site Nucleophile is the cysteine 131. Histidine 213 functions as the Proton donor in the catalytic mechanism. Coiled-coil stretches lie at residues 240–256 (WEDS…VMAE) and 298–324 (GTLQ…DTPT). The interval 307-326 (DEQGESGNGDSQRPDTPTTL) is disordered. The span at 314–326 (NGDSQRPDTPTTL) shows a compositional bias: polar residues. A ULD domain is found at 375 to 403 (NYDKFICTFLSMLAHQGVLGELVSQHLLP). The positively charged C-terminal tail required for binding nucleosomes stretch occupies residues 405 to 471 (KKVSGQGAAN…KGRNKCRKRK (67 aa)). Residues 412–471 (AANRISKQSTTASAGGSTAAGTASTPKTQQQQAAAAKNGKSPSKTPGRRRKGRNKCRKRK) form a disordered region. Over residues 420–447 (STTASAGGSTAAGTASTPKTQQQQAAAA) the composition is skewed to low complexity. Positions 457-471 (PGRRRKGRNKCRKRK) are enriched in basic residues.

The protein belongs to the peptidase C12 family. BAP1 subfamily. As to quaternary structure, catalytic component of the polycomb repressive deubiquitinase (PR-DUB) complex, at least composed of caly/calypso, Asx and sba (MBD5/6 homolog). The PR-DUB complex associates with nucleosomes to mediate deubiquitination of histone H2AK118ub1 substrates; the association requires the positively charged C-terminal tail of caly, probably due to direct binding of DNA. Interacts (via ULD domain) with Asx (via DEUBAD domain); the interaction produces a stable heterodimer with a composite binding site for ubiquitin. Homodimerizes (via coiled-coil hinge-region between the UCH and ULD domains) to mediate assembly of 2 copies of the caly-Asx heterodimer into a bisymmetric tetramer; dimerization enhances PR-DUB association with nucleosomes.

Its subcellular location is the nucleus. The enzyme catalyses Thiol-dependent hydrolysis of ester, thioester, amide, peptide and isopeptide bonds formed by the C-terminal Gly of ubiquitin (a 76-residue protein attached to proteins as an intracellular targeting signal).. Functionally, catalytic component of the polycomb repressive deubiquitinase (PR-DUB) complex, a complex that specifically mediates deubiquitination of histone H2A monoubiquitinated at 'Lys-119' (H2AK118ub1). Mediates bisymmetric organization of the PR-DUB complex and is involved in association with nucleosomes to mediate deubiquitination. Does not deubiquitinate monoubiquitinated histone H2B. Required to maintain the transcriptionally repressive state of homeotic genes throughout development. The PR-DUB complex has weak or no activity toward 'Lys-48'- and 'Lys-63'-linked polyubiquitin chains. Polycomb group (PcG) protein. The chain is Ubiquitin carboxyl-terminal hydrolase calypso from Drosophila melanogaster (Fruit fly).